We begin with the raw amino-acid sequence, 121 residues long: Small ribosomal subunit protein uS13 (121 aa).

The segment at 94 to 121 (GLPVRGQRTRTNARTRKGPRKGAAALKK) is disordered.

It belongs to the universal ribosomal protein uS13 family. Part of the 30S ribosomal subunit. Forms a loose heterodimer with protein S19. Forms two bridges to the 50S subunit in the 70S ribosome.

Functionally, located at the top of the head of the 30S subunit, it contacts several helices of the 16S rRNA. In the 70S ribosome it contacts the 23S rRNA (bridge B1a) and protein L5 of the 50S subunit (bridge B1b), connecting the 2 subunits; these bridges are implicated in subunit movement. Contacts the tRNAs in the A and P-sites. This chain is Small ribosomal subunit protein uS13, found in Verminephrobacter eiseniae (strain EF01-2).